Reading from the N-terminus, the 757-residue chain is Dapper homolog 2 (757 aa).

The tract at residues 1–281 (MWAPSGQGPA…QSPLFALPKE (281 aa)) is inhibition of Nodal signaling. A coiled-coil region spans residues 55–107 (RGQELRLEAALTALREQLSRLRRQDAGLKTHLDQLDQQISELQLDVSRSSCEA). Disordered regions lie at residues 486-540 (RRRV…CSES), 584-684 (RWQS…EGCF), and 696-728 (AEAGQGGWAWPRVPPQQPSRAPGNTRPPLPPVP). 2 stretches are compositionally biased toward basic and acidic residues: residues 505–516 (ERQRVTERDPSR) and 631–644 (ACARCESDPSEHSA). Positions 645-656 (DCTSLYHSTIAE) are enriched in polar residues. The span at 664–673 (SDHTANRFGD) shows a compositional bias: basic and acidic residues. Residues 754–757 (MTMV) carry the PDZ-binding motif.

It belongs to the dapper family. As to quaternary structure, can form homodimers and heterodimers with DACT1 or DACT3. Interacts with CSNK1D, PKA catalytic subunit, PKC-type kinase, CSNK2B, DVL1, DVL2, DVL3, VANGL1, VANGL2, TGFBR1, CTNNB1, CTNND2, CTNND1, LEF1, TCF7, TCF7L1 and HDAC1. As to expression, expressed in kidney (inner medullary collecting duct). Expressed in epidermal keratinocytes and hair follicles.

Its function is as follows. Involved in regulation of intracellular signaling pathways during development. Negatively regulates the Nodal signaling pathway, possibly by promoting the lysosomal degradation of Nodal receptors, such as TGFBR1. May be involved in control of the morphogenetic behavior of kidney ureteric bud cells by keeping cells epithelial and restraining their mesenchymal character. May play an inhibitory role in the re-epithelialization of skin wounds by attenuating TGF-beta signaling. In Mus musculus (Mouse), this protein is Dapper homolog 2 (Dact2).